Consider the following 300-residue polypeptide: Tyrosine recombinase XerC (300 aa).

In terms of domain architecture, Core-binding (CB) spans 2-88 (TQEGKLEQQF…SLRSFYTFLL (87 aa)). One can recognise a Tyr recombinase domain in the interval 109–294 (RLPKFFYSEE…TKEHLKSTYM (186 aa)). Residues arginine 150, lysine 174, histidine 246, arginine 249, and histidine 272 contribute to the active site. The active-site O-(3'-phospho-DNA)-tyrosine intermediate is the tyrosine 281.

The protein belongs to the 'phage' integrase family. XerC subfamily. In terms of assembly, forms a cyclic heterotetrameric complex composed of two molecules of XerC and two molecules of XerD.

It localises to the cytoplasm. Site-specific tyrosine recombinase, which acts by catalyzing the cutting and rejoining of the recombining DNA molecules. The XerC-XerD complex is essential to convert dimers of the bacterial chromosome into monomers to permit their segregation at cell division. It also contributes to the segregational stability of plasmids. The protein is Tyrosine recombinase XerC of Listeria monocytogenes serotype 4a (strain HCC23).